We begin with the raw amino-acid sequence, 100 residues long: Urease subunit gamma (100 aa).

It belongs to the urease gamma subunit family. In terms of assembly, heterotrimer of UreA (gamma), UreB (beta) and UreC (alpha) subunits. Three heterotrimers associate to form the active enzyme.

Its subcellular location is the cytoplasm. The enzyme catalyses urea + 2 H2O + H(+) = hydrogencarbonate + 2 NH4(+). It functions in the pathway nitrogen metabolism; urea degradation; CO(2) and NH(3) from urea (urease route): step 1/1. The protein is Urease subunit gamma of Prochlorococcus marinus (strain MIT 9303).